A 42-amino-acid chain; its full sequence is Photosystem II reaction center protein J (42 aa).

The chain crosses the membrane as a helical span at residues 10 to 30; it reads IPLWLVGTVVGTLALGLVALF.

It belongs to the PsbJ family. In terms of assembly, PSII is composed of 1 copy each of membrane proteins PsbA, PsbB, PsbC, PsbD, PsbE, PsbF, PsbH, PsbI, PsbJ, PsbK, PsbL, PsbM, PsbT, PsbX, PsbY, PsbZ, Psb30/Ycf12, at least 3 peripheral proteins of the oxygen-evolving complex and a large number of cofactors. It forms dimeric complexes.

The protein resides in the plastid. It is found in the chloroplast thylakoid membrane. Functionally, one of the components of the core complex of photosystem II (PSII). PSII is a light-driven water:plastoquinone oxidoreductase that uses light energy to abstract electrons from H(2)O, generating O(2) and a proton gradient subsequently used for ATP formation. It consists of a core antenna complex that captures photons, and an electron transfer chain that converts photonic excitation into a charge separation. This chain is Photosystem II reaction center protein J, found in Oltmannsiellopsis viridis (Marine flagellate).